The sequence spans 428 residues: Glutamate-1-semialdehyde 2,1-aminomutase (428 aa).

Residue K265 is modified to N6-(pyridoxal phosphate)lysine.

The protein belongs to the class-III pyridoxal-phosphate-dependent aminotransferase family. HemL subfamily. In terms of assembly, homodimer. Pyridoxal 5'-phosphate is required as a cofactor.

The protein localises to the cytoplasm. It catalyses the reaction (S)-4-amino-5-oxopentanoate = 5-aminolevulinate. It functions in the pathway porphyrin-containing compound metabolism; protoporphyrin-IX biosynthesis; 5-aminolevulinate from L-glutamyl-tRNA(Glu): step 2/2. The protein is Glutamate-1-semialdehyde 2,1-aminomutase of Shewanella loihica (strain ATCC BAA-1088 / PV-4).